An 801-amino-acid chain; its full sequence is Phenylalanine--tRNA ligase beta subunit (801 aa).

A tRNA-binding domain is found at 39–153 (AEGLSKLVVG…EEAVPGDAIF (115 aa)). A B5 domain is found at 406–481 (TEPVEVSTSL…RIYGYDKLPT (76 aa)). Aspartate 459, aspartate 465, glutamate 468, and glutamate 469 together coordinate Mg(2+). Residues 708–801 (TKFPAMTRDI…LTEQVGAEVR (94 aa)) form the FDX-ACB domain.

The protein belongs to the phenylalanyl-tRNA synthetase beta subunit family. Type 1 subfamily. In terms of assembly, tetramer of two alpha and two beta subunits. Mg(2+) is required as a cofactor.

The protein localises to the cytoplasm. It carries out the reaction tRNA(Phe) + L-phenylalanine + ATP = L-phenylalanyl-tRNA(Phe) + AMP + diphosphate + H(+). The protein is Phenylalanine--tRNA ligase beta subunit of Streptococcus pyogenes serotype M18 (strain MGAS8232).